A 344-amino-acid polypeptide reads, in one-letter code: Fructose-bisphosphate aldolase (344 aa).

Residue S53 participates in D-glyceraldehyde 3-phosphate binding. Residue D95 is the Proton donor of the active site. Zn(2+) contacts are provided by H96, D131, E161, and H212. Residue G213 coordinates dihydroxyacetone phosphate. H252 is a binding site for Zn(2+). Residues 253-255 and 274-277 contribute to the dihydroxyacetone phosphate site; these read GGS and NVDT.

The protein belongs to the class II fructose-bisphosphate aldolase family. Requires Zn(2+) as cofactor.

It catalyses the reaction beta-D-fructose 1,6-bisphosphate = D-glyceraldehyde 3-phosphate + dihydroxyacetone phosphate. Its pathway is carbohydrate degradation; glycolysis; D-glyceraldehyde 3-phosphate and glycerone phosphate from D-glucose: step 4/4. Its function is as follows. Catalyzes the aldol condensation of dihydroxyacetone phosphate (DHAP or glycerone-phosphate) with glyceraldehyde 3-phosphate (G3P) to form fructose 1,6-bisphosphate (FBP) in gluconeogenesis and the reverse reaction in glycolysis. The chain is Fructose-bisphosphate aldolase (fba) from Mycobacterium bovis (strain ATCC BAA-935 / AF2122/97).